The sequence spans 1023 residues: Sodium/potassium-transporting ATPase subunit alpha-1 (1023 aa).

The propeptide occupies 1 to 5 (MGKGV). The span at 1-11 (MGKGVGRDKYE) shows a compositional bias: basic and acidic residues. The interval 1 to 39 (MGKGVGRDKYEPAAVSEHGDKKGKKAKKERDMDELKKEV) is disordered. Residues 6–96 (GRDKYEPAAV…PEWVKFCRQL (91 aa)) lie on the Cytoplasmic side of the membrane. An N6-acetyllysine modification is found at Lys9. At Tyr10 the chain carries Phosphotyrosine. Ser16 is modified (phosphoserine). Lys21 is modified (N6-acetyllysine). The segment covering 28 to 39 (KERDMDELKKEV) has biased composition (basic and acidic residues). Ser40 and Ser47 each carry phosphoserine. The tract at residues 82-84 (PPP) is phosphoinositide-3 kinase binding. A helical transmembrane segment spans residues 97 to 117 (FGGFSMLLWIGAILCFLAYGI). Residues 118 to 129 (RSATEEEPPNDD) lie on the Extracellular side of the membrane. A helical membrane pass occupies residues 130–150 (LYLGVVLSAVVIITGCFSYYQ). Over 151–291 (EAKSSKIMES…TPIAEEIEHF (141 aa)) the chain is Cytoplasmic. The tract at residues 216–235 (SSLTGESEPQTRSPDFTNEN) is disordered. Ser228 carries the post-translational modification Phosphoserine. Position 260 is a phosphotyrosine (Tyr260). Residues 292-312 (IHLITGVAVFLGVSFFILSLI) form a helical membrane-spanning segment. The Extracellular portion of the chain corresponds to 313-319 (LEYTWLE). The chain crosses the membrane as a helical span at residues 320 to 340 (AVIFLIGIIVANVPEGLLATV). Topologically, residues 341 to 775 (TVCLTLTAKR…RLIFDNLKKS (435 aa)) are cytoplasmic. Asp376 (4-aspartylphosphate intermediate) is an active-site residue. Phosphoserine is present on residues Ser452 and Ser484. Lys487 serves as a coordination point for ATP. Tyr542 carries the phosphotyrosine modification. Residues 596–717 (RAAVPDAVGK…QGAIVAVTGD (122 aa)) form a mediates interaction with SCN7A region. Position 661 is an N6-succinyllysine (Lys661). Phosphoserine is present on residues Ser668 and Ser675. The Mg(2+) site is built by Asp717 and Asp721. A helical transmembrane segment spans residues 776 to 798 (IAYTLTSNIPEITPFLIFIIANI). At 799–801 (PLP) the chain is on the extracellular side. A helical membrane pass occupies residues 802-824 (LGTVTILCIDLGTDMVPAISLAY). At 825–849 (EQAESDIMKRQPRNPKTDKLVNERL) the chain is on the cytoplasmic side. The helical transmembrane segment at 850–872 (ISMAYGQIGMIQALGGFFTYFVI) threads the bilayer. Residues 873–915 (LAENGFLPFHLLGIRETWDDRWVNDVEDSYGQQWTYEQRKIVE) lie on the Extracellular side of the membrane. The chain crosses the membrane as a helical span at residues 916 to 936 (FTCHTAFFVSIVVVQWADLVI). The Cytoplasmic portion of the chain corresponds to 937-952 (CKTRRNSVFQQGMKNK). Ser943 is subject to Phosphoserine; by PKA. Residues 953–973 (ILIFGLFEETALAAFLSYCPG) form a helical membrane-spanning segment. Over 974–979 (MGAALR) the chain is Extracellular. A helical membrane pass occupies residues 980-1000 (MYPLKPTWWFCAFPYSLLIFV). Topologically, residues 1001-1023 (YDEVRKLIIRRRPGGWVEKETYY) are cytoplasmic.

It belongs to the cation transport ATPase (P-type) (TC 3.A.3) family. Type IIC subfamily. In terms of assembly, the sodium/potassium-transporting ATPase is composed of a catalytic alpha subunit, an auxiliary non-catalytic beta subunit and an additional regulatory subunit. Interacts with regulatory subunit FXYD1. Interacts with regulatory subunit FXYD3. Interacts with SIK1. Interacts with SLC35G1 and STIM1. Interacts with CLN3; this interaction regulates the sodium/potassium-transporting ATPase complex localization at the plasma membrane. Interacts with SCN7A; activates ATP1A1 P-type sodium:potassium-exchanging transporter activity which indirectly signals to nearby neurons to regulate sodium homeostasis. Phosphorylation on Tyr-10 modulates pumping activity. Phosphorylation of Ser-943 by PKA modulates the response of ATP1A1 to PKC. Dephosphorylation by protein phosphatase 2A (PP2A) following increases in intracellular sodium, leading to increase catalytic activity.

The protein localises to the cell membrane. It localises to the basolateral cell membrane. Its subcellular location is the sarcolemma. It is found in the cell projection. The protein resides in the axon. The protein localises to the melanosome. It catalyses the reaction K(+)(out) + Na(+)(in) + ATP + H2O = K(+)(in) + Na(+)(out) + ADP + phosphate + H(+). This is the catalytic component of the active enzyme, which catalyzes the hydrolysis of ATP coupled with the exchange of sodium and potassium ions across the plasma membrane. This action creates the electrochemical gradient of sodium and potassium ions, providing the energy for active transport of various nutrients. Could also be part of an osmosensory signaling pathway that senses body-fluid sodium levels and controls salt intake behavior as well as voluntary water intake to regulate sodium homeostasis. This is Sodium/potassium-transporting ATPase subunit alpha-1 (Atp1a1) from Mus musculus (Mouse).